We begin with the raw amino-acid sequence, 118 residues long: Large ribosomal subunit protein bL19 (118 aa).

It belongs to the bacterial ribosomal protein bL19 family.

In terms of biological role, this protein is located at the 30S-50S ribosomal subunit interface and may play a role in the structure and function of the aminoacyl-tRNA binding site. This chain is Large ribosomal subunit protein bL19, found in Salinibacter ruber (strain DSM 13855 / M31).